The following is a 77-amino-acid chain: Putative defensin-like protein 162 (77 aa).

Residues 1–27 form the signal peptide; that stretch reads MAKQLCSYMFISMFILSAFLALPSAEG. Cystine bridges form between Cys34–Cys77, Cys44–Cys63, Cys49–Cys71, and Cys53–Cys73.

Belongs to the DEFL family.

The protein resides in the secreted. The protein is Putative defensin-like protein 162 (LCR37) of Arabidopsis thaliana (Mouse-ear cress).